The sequence spans 290 residues: MAPSNLPPVFNATSQDIEMLLAAQCHLGSKNLQVHMEPYLWKTRPDGINVINIGKTWEKIVLAARIIAAIDNPADVAVISARPYGQRAVLKFASHTGATAIAGRFTPGNFTNYITRSFKEPRLIIVTDPRTDAQAIKEASYVNIPVIALCDTDSPTEFVDVAIPTNNKGRHAIGLVWWLLAREVLRLRGTLATRETEWDVVVDLYFYRDPEAEETKEIADESKVPGAEEVGPAAIETGYVGDSWDAAAPGAAAPGSAFAAASATAGATWEAEAGGDWAAESAQPNPETKW.

A compositionally biased stretch (low complexity) spans alanine 263–alanine 282. The disordered stretch occupies residues alanine 263–tryptophan 290.

The protein belongs to the universal ribosomal protein uS2 family. In terms of assembly, component of the small ribosomal subunit. Mature ribosomes consist of a small (40S) and a large (60S) subunit. The 40S subunit contains about 33 different proteins and 1 molecule of RNA (18S). The 60S subunit contains about 49 different proteins and 3 molecules of RNA (25S, 5.8S and 5S). Interacts with rps21.

The protein localises to the cytoplasm. Functionally, required for the assembly and/or stability of the 40S ribosomal subunit. Required for the processing of the 20S rRNA-precursor to mature 18S rRNA in a late step of the maturation of 40S ribosomal subunits. The sequence is that of Small ribosomal subunit protein uS2 (rps0) from Talaromyces stipitatus (strain ATCC 10500 / CBS 375.48 / QM 6759 / NRRL 1006) (Penicillium stipitatum).